The sequence spans 121 residues: Large ribosomal subunit protein bL12 (121 aa).

Belongs to the bacterial ribosomal protein bL12 family. As to quaternary structure, homodimer. Part of the ribosomal stalk of the 50S ribosomal subunit. Forms a multimeric L10(L12)X complex, where L10 forms an elongated spine to which 2 to 4 L12 dimers bind in a sequential fashion. Binds GTP-bound translation factors.

In terms of biological role, forms part of the ribosomal stalk which helps the ribosome interact with GTP-bound translation factors. Is thus essential for accurate translation. The polypeptide is Large ribosomal subunit protein bL12 (Oenococcus oeni (strain ATCC BAA-331 / PSU-1)).